The sequence spans 89 residues: Transcriptional regulator WhiB2 (89 aa).

A compositionally biased stretch (pro residues) spans 1 to 15 (MVPEAPAPFEEPLPP). Residues 1–24 (MVPEAPAPFEEPLPPEATDQWQDR) are disordered. Residues 26 to 83 (LCAQTDPEAFFPEKGGSTREAKKICMGCEVRHECLEYALAHDERFGIWGGLSERERRR) form the 4Fe-4S Wbl-type domain. A [4Fe-4S] cluster-binding site is contributed by cysteine 27. Residue serine 42 is modified to Phosphoserine. Residues cysteine 50, cysteine 53, and cysteine 59 each contribute to the [4Fe-4S] cluster site.

It belongs to the WhiB family. [4Fe-4S] cluster is required as a cofactor. In terms of processing, may be phosphorylated, possibly on Ser-42. The cluster is degraded quickly in the presence of air. Upon cluster removal intramolecular disulfide bonds are formed. Post-translationally, the Fe-S cluster can be nitrosylated by nitric oxide (NO).

Its subcellular location is the cytoplasm. Its function is as follows. Acts as a transcriptional regulator. Probably redox-responsive. The apo- but not holo-form probably binds DNA. Functionally, the apo-form functions as a chaperone, preventing aggregation or helping in correct refolding of a number of substrates; this activity does not require ATP or the ability to bind a Fe-S cluster. Chaperone activity is insensitive to the redox state of its cysteine residues. The apo-form has no protein disulfide reductase activity. The apo-form binds to its own promoter. In Mycobacterium tuberculosis (strain ATCC 25618 / H37Rv), this protein is Transcriptional regulator WhiB2 (whiB2).